A 528-amino-acid chain; its full sequence is Na(+)/H(+) antiporter NhaB (528 aa).

11 helical membrane passes run 23–45 (FAIL…VAGW), 66–86 (PGGL…SQVL), 95–115 (VLLL…LLLF), 139–159 (AFLS…AVAV), 203–223 (LLMH…VGEP), 241–261 (LRMS…CFLV), 310–330 (LIIG…SVII), 349–369 (EEAL…GVII), 390–410 (LVIF…VFVG), 448–468 (ATPN…APLI), and 476–496 (VWMA…AIQF).

Belongs to the NhaB Na(+)/H(+) (TC 2.A.34) antiporter family.

The protein resides in the cell inner membrane. It catalyses the reaction 2 Na(+)(in) + 3 H(+)(out) = 2 Na(+)(out) + 3 H(+)(in). Functionally, na(+)/H(+) antiporter that extrudes sodium in exchange for external protons. The protein is Na(+)/H(+) antiporter NhaB of Shewanella piezotolerans (strain WP3 / JCM 13877).